A 233-amino-acid chain; its full sequence is UPF0758 protein RoseRS_0767 (233 aa).

An MPN domain is found at 107-229 (LIRSPTDAAQ…FVSMRERGLG (123 aa)). Zn(2+) is bound by residues histidine 178, histidine 180, and aspartate 191. The short motif at 178 to 191 (HNHPSGDPTPSPED) is the JAMM motif element.

This sequence belongs to the UPF0758 family.

The chain is UPF0758 protein RoseRS_0767 from Roseiflexus sp. (strain RS-1).